The primary structure comprises 519 residues: Phosphate acetyltransferase (519 aa).

Residues 196 to 519 are phosphate acetyltransferase; the sequence is AFQRSLEKKA…LISAIQAQDY (324 aa).

The protein in the N-terminal section; belongs to the CobB/CobQ family. This sequence in the C-terminal section; belongs to the phosphate acetyltransferase and butyryltransferase family.

Its subcellular location is the cytoplasm. The enzyme catalyses acetyl-CoA + phosphate = acetyl phosphate + CoA. It participates in metabolic intermediate biosynthesis; acetyl-CoA biosynthesis; acetyl-CoA from acetate: step 2/2. The protein is Phosphate acetyltransferase (pta) of Helicobacter pylori (strain J99 / ATCC 700824) (Campylobacter pylori J99).